Here is a 352-residue protein sequence, read N- to C-terminus: NAD(P)H pyrophosphatase NUDT13, mitochondrial (352 aa).

A mitochondrion-targeting transit peptide spans 1-20 (MSLYCRTFFRRKSFGCYRLL). The Nudix hydrolase domain maps to 196–323 (PQMAPVVITL…SLALQPSEAS (128 aa)). The Nudix box signature appears at 216–240 (RQSSFPKGLYSALAGFCDIGESVEE).

It belongs to the Nudix hydrolase family. Mg(2+) is required as a cofactor. It depends on Mn(2+) as a cofactor.

It is found in the mitochondrion. It catalyses the reaction NADH + H2O = reduced beta-nicotinamide D-ribonucleotide + AMP + 2 H(+). The enzyme catalyses NAD(+) + H2O = beta-nicotinamide D-ribonucleotide + AMP + 2 H(+). The catalysed reaction is NADPH + H2O = reduced beta-nicotinamide D-ribonucleotide + adenosine 2',5'-bisphosphate + 2 H(+). In terms of biological role, NAD(P)H pyrophosphatase that hydrolyzes NADH into NMNH and AMP, and NADPH into NMNH and 2',5'-ADP. Has a marked preference for the reduced pyridine nucleotides. Does not show activity toward NAD-capped RNAs; the NAD-cap is an atypical cap present at the 5'-end of some RNAs. The polypeptide is NAD(P)H pyrophosphatase NUDT13, mitochondrial (Mus musculus (Mouse)).